The primary structure comprises 328 residues: Glucokinase (328 aa).

Residue 16–21 (ADIGGT) participates in ATP binding.

It belongs to the bacterial glucokinase family.

The protein resides in the cytoplasm. The catalysed reaction is D-glucose + ATP = D-glucose 6-phosphate + ADP + H(+). The chain is Glucokinase from Neisseria gonorrhoeae (strain ATCC 700825 / FA 1090).